The sequence spans 656 residues: Cyclic AMP-dependent transcription factor ATF-6 alpha (656 aa).

The interval 1-137 (MESPFSPVLP…SPSSVEPLKE (137 aa)) is transcription activation. At 1-377 (MESPFSPVLP…VMIVLAFIML (377 aa)) the chain is on the cytoplasmic side. Lys75 is covalently cross-linked (Glycyl lysine isopeptide (Lys-Gly) (interchain with G-Cter in SUMO2)). The tract at residues 75–169 (KAEPQPLSPA…MSSKPSVQPK (95 aa)) is disordered. 2 stretches are compositionally biased toward low complexity: residues 78–101 (PQPL…SCSS) and 111–121 (LLSSSQSPLSL). Residue Lys139 forms a Glycyl lysine isopeptide (Lys-Gly) (interchain with G-Cter in ubiquitin) linkage. Residues 293–356 (VLRRQQRMIK…DEVVSENQRL (64 aa)) form the bZIP domain. The segment at 295–326 (RRQQRMIKNRESACQSRKKKKEYMLGLEARLK) is basic motif. The tract at residues 335–342 (LKKENGSL) is leucine-zipper. Residues 378–398 (NYGPMSMLEQESRRVKPSVSP) traverse the membrane as a helical; Signal-anchor for type II membrane protein segment. The tract at residues 391–429 (RVKPSVSPANQRRHLLEFSAKEVKDTSDGDNQKDSYSYD) is disordered. Topologically, residues 399-656 (ANQRRHLLEF…VVSTIPESLQ (258 aa)) are lumenal. Residues 404 to 427 (HLLEFSAKEVKDTSDGDNQKDSYS) are compositionally biased toward basic and acidic residues. Residues 455–575 (QPLINTTESL…ATTHNKTTRP (121 aa)) are interaction with THBS4. Residues Asn459, Asn570, and Asn629 are each glycosylated (N-linked (GlcNAc...) asparagine). The segment covering 632 to 650 (STFFGSPPTTTETTHVVST) has biased composition (low complexity). A disordered region spans residues 632-656 (STFFGSPPTTTETTHVVSTIPESLQ).

Belongs to the bZIP family. ATF subfamily. As to quaternary structure, interacts with XBP1 isoform 2; the interaction occurs in a ER stress-dependent manner. Interacts with LACC1. In terms of assembly, interacts with THBS4 (via EGF-like 3; calcium-binding domain) which facilitates its processing, activation and nuclear translocation. Interacts (via lumenal domain) with THBS1. Homodimer and heterodimer with ATF6-beta. The dimer interacts with the nuclear transcription factor Y (NF-Y) trimer through direct binding to NF-Y subunit C (NF-YC). Also interacts with the transcription factors GTF2I, YY1 and SRF. Post-translationally, during unfolded protein response, a fragment of approximately 50 kDa containing the cytoplasmic transcription factor domain is released by proteolysis. The cleavage seems to be performed sequentially by site-1 (MBTPS1, S1P) and site-2 (MBTPS2, S2P) proteases. In terms of processing, N-glycosylated; in its luminal domain. The glycosylation status may serve as a sensor for ER homeostasis, resulting in ATF6 activation to trigger the unfolded protein response (UPR). Ubiquitinated by RNF186 at Lys-139, which is required for pattern recognition receptor-induced unfolded protein response-associated outcomes.

It is found in the endoplasmic reticulum membrane. The protein localises to the golgi apparatus membrane. Its subcellular location is the nucleus. In terms of biological role, precursor of the transcription factor form (Processed cyclic AMP-dependent transcription factor ATF-6 alpha), which is embedded in the endoplasmic reticulum membrane. Endoplasmic reticulum stress promotes processing of this form, releasing the transcription factor form that translocates into the nucleus, where it activates transcription of genes involved in the unfolded protein response (UPR). Transcription factor that initiates the unfolded protein response (UPR) during endoplasmic reticulum stress by activating transcription of genes involved in the UPR. Binds DNA on the 5'-CCAC[GA]-3'half of the ER stress response element (ERSE) (5'-CCAAT-N(9)-CCAC[GA]-3') and of ERSE II (5'-ATTGG-N-CCACG-3'). Binding to ERSE requires binding of NF-Y to ERSE. Could also be involved in activation of transcription by the serum response factor. May play a role in foveal development and cone function in the retina. This Mus musculus (Mouse) protein is Cyclic AMP-dependent transcription factor ATF-6 alpha (Atf6).